We begin with the raw amino-acid sequence, 63 residues long: Large ribosomal subunit protein uL29 (63 aa).

It belongs to the universal ribosomal protein uL29 family.

The chain is Large ribosomal subunit protein uL29 from Marinomonas sp. (strain MWYL1).